We begin with the raw amino-acid sequence, 201 residues long: Oligoribonuclease (201 aa).

The region spanning M5–L169 is the Exonuclease domain. Y126 is an active-site residue.

It belongs to the oligoribonuclease family.

The protein resides in the cytoplasm. Functionally, 3'-to-5' exoribonuclease specific for small oligoribonucleotides. The chain is Oligoribonuclease from Streptomyces griseus.